Reading from the N-terminus, the 209-residue chain is Geminin (209 aa).

The interval 1 to 79 (MNPSMKQKQE…PESSENKNLG (79 aa)) is disordered. Basic and acidic residues predominate over residues 7–16 (QKQEEIKENI). At Lys27 the chain carries N6-acetyllysine. A phosphoserine mark is found at Ser34, Ser36, Ser49, Ser63, and Ser64. The tract at residues 82-161 (TQESFDLMIK…AELIERLNGE (80 aa)) is necessary and sufficient for interaction with IDAS and CDT1. Positions 94–144 (PSSQYWKEVAEKRRKALYEALKENEKLHKEIEQKDNEIARLKKENKELAEV) form a coiled coil. A disordered region spans residues 164 to 209 (DNFESLDNQEFDSEEETVEDSLVEDSEIGTCAEGTVSSSTDAKPCI). A homeodomain binding region spans residues 170-190 (DNQEFDSEEETVEDSLVEDSE). Residues 170-190 (DNQEFDSEEETVEDSLVEDSE) are compositionally biased toward acidic residues. Ser184 carries the phosphoserine; by CK2 modification. A compositionally biased stretch (polar residues) spans 198–209 (TVSSSTDAKPCI).

Belongs to the geminin family. As to quaternary structure, homotetramer. Interacts with CDT1; this inhibits binding of the MCM complex to origins of replication. The complex with CDT1 exists in two forms, a 'permissive' heterotrimer and an 'inhibitory' heterohexamer. Interacts (via coiled-coil domain) with IDAS (via coiled-coil domain); this targets GMNN to the nucleus. The heterodimer formed by GMNN and MCIDAS has much lower affinity for CDT1 than the GMNN homodimer. Interacts with a subset of Hox proteins, affinity increasing from anterior to posterior types, the strongest interaction being with HOXB1, HOXC9 and HOXD10. Interacts with LRWD1 from G1/S to mitosis. Post-translationally, phosphorylated during mitosis. Phosphorylation at Ser-184 by CK2 results in enhanced binding to Hox proteins and more potent inhibitory effect on Hox transcriptional activity.

The protein resides in the cytoplasm. Its subcellular location is the nucleus. Inhibits DNA replication by preventing the incorporation of MCM complex into pre-replication complex (pre-RC). It is degraded during the mitotic phase of the cell cycle. Its destruction at the metaphase-anaphase transition permits replication in the succeeding cell cycle. Inhibits histone acetyltransferase activity of KAT7/HBO1 in a CDT1-dependent manner, inhibiting histone H4 acetylation and DNA replication licensing. Inhibits the transcriptional activity of a subset of Hox proteins, enrolling them in cell proliferative control. This is Geminin (GMNN) from Homo sapiens (Human).